A 567-amino-acid polypeptide reads, in one-letter code: MMLISQPMADRPLSWSGLSRRPWRRQLAVTRVFLLFVFFLSWDRLTAPRSAQRRYRRAQWLVQQLLYLGPTFIKIGQSLSTRADIIPAEYIEAFTQLQDRVPPFDSRQAIAVIEQELHGAIDEIFQQFEVTPLASASLGQVHRAVLPTGEAVVVKVQRPGLDSLLNLDFELLHQTLRLAKRWLPGFRRLAQKYEIEAIYQEFFSLLFLEIDYIHEGKNAERFRQNFADYPRVRVPEIYWQYTTRMVLTLEYLPGIKVDDRQALETAGINLDLVIQTGICAYLKQLLVDGFFQSDPHPGNMAVDSQGDLIFYDFGTMAEVKIIAKDQMVQTFFAVLRKDTNQVLEALIYMGLVEPKGDLSPIKRIINFLLDNFRDKPIDIKAFDQVGEEVYAMFQQQPFRLPPQMTFILKSISTLDGIARALDPRYNLIAASQPFIQSITVAQPKRSLAMALLQQVKQFALDQLNRPSRNQQFLQELAAKLERGELQFATRSPEGDRLLRKIHLALKSLIFACLTGFTLLSATVLLSTVYARFAVVGFGLAGLFGLFLLRSLIKLAVQEKLDRLVQKR.

This sequence belongs to the protein kinase superfamily. ADCK protein kinase family.

This is an uncharacterized protein from Synechocystis sp. (strain ATCC 27184 / PCC 6803 / Kazusa).